Consider the following 1006-residue polypeptide: Zinc finger protein ZFPM1 (1006 aa).

Residues 1–13 (MSRRKQSNPRQIK) show a composition bias toward basic residues. Disordered regions lie at residues 1 to 93 (MSRR…DELE) and 114 to 133 (SWGPFHGSVQTRASSPRQAE). Basic and acidic residues predominate over residues 15–25 (SLGDMEAREEV). Positions 42–62 (APSPPSADVNSPPPLPPPTSP) are enriched in pro residues. The segment covering 66–79 (KELEGQEPEPRPTE) has biased composition (basic and acidic residues). Phosphoserine is present on residues Ser-84 and Ser-128. Positions 121–130 (SVQTRASSPR) are enriched in polar residues. The CCHC FOG-type 1 zinc-finger motif lies at 235 to 268 (VINKDVFPCKDCGIWYRSERNLQAHLLYYCASRQ). Zn(2+) contacts are provided by Cys-243, Cys-246, His-259, and Cys-264. A Phosphoserine modification is found at Ser-272. 3 C2H2-type zinc fingers span residues 290–314 (RVCPFPQCRKSCPSASSLEIHMRSH), 320–342 (FVCLICLSAFTTKANCERHLKVH), and 348–371 (GVCHSCGFISTTRDILYSHLVTNH). Positions 330–341 (TTKANCERHLKV) are interaction with TACC3. Phosphoserine is present on Ser-384. Disordered regions lie at residues 384 to 409 (SPGAGHPATKLPPDSLGSFQQQHTAL), 438 to 460 (NGEARAEPLAQNGGSSEPPAAPR), and 473 to 515 (APIL…SPVP). Low complexity predominate over residues 485–515 (APSRTPSPRSPAPARVKAELSSPTPGSSPVP). 2 positions are modified to phosphoserine: Ser-491 and Ser-494. The CCHC FOG-type 2 zinc finger occupies 571-604 (PGAPKGATCFECEITFSNVNNYYVHKRLYCSGRR). Positions 579, 582, 595, and 600 each coordinate Zn(2+). Positions 605 to 681 (APEDAPAARR…SVDDAEDDPS (77 aa)) are disordered. Over residues 617–629 (APPGPARAPPGQP) the composition is skewed to pro residues. A phosphoserine mark is found at Ser-638 and Ser-671. A CCHC FOG-type 3 zinc finger spans residues 677 to 710 (EDDPSRTLCEACNIRFSRHETYTVHKRYYCASRH). The Zn(2+) site is built by Cys-685, Cys-688, His-701, and Cys-706. A disordered region spans residues 708 to 810 (SRHDPPPRRP…PRRPLPGAPA (103 aa)). Composition is skewed to pro residues over residues 715–735 (RRPAAPPGPPGPAAPPAPSPA) and 754–769 (APPPPPPGHAPAPESP). A compositionally biased stretch (low complexity) spans 780–791 (GLAPARSPGPAA). A Phosphoserine modification is found at Ser-786. The interaction with CTBP2 stretch occupies residues 794–800 (PIDLSKK). The CCHC FOG-type 4 zinc finger occupies 811 to 844 (PALADYHECTACRVSFHSLEAYLAHKKYSCPAAP). Residues Cys-819, Cys-822, His-835, and Cys-840 each coordinate Zn(2+). A C2H2-type 4 zinc finger spans residues 854–877 (AACPYCPPNGPVRGDLLEHFRLAH). The interval 889–971 (GVEARTPADR…KGTPAPLPNG (83 aa)) is disordered. Phosphoserine is present on residues Ser-901, Ser-909, Ser-914, and Ser-935. Residues 925–950 (PQEPPPGPPPSPAAAPEAVPPPPAPP) are compositionally biased toward pro residues. Residues 968–1001 (LPNGNHRYCRLCNIKFSSLSTFIAHKKYYCSSHA) form a CCHC FOG-type 5 zinc finger. The Zn(2+) site is built by Cys-976, Cys-979, His-992, and Cys-997.

Belongs to the FOG (Friend of GATA) family. In terms of assembly, interacts with corepressor CTBP2; this interaction is however not essential for corepressor activity. Interacts with the N-terminal zinc-finger of GATA1, GATA2 and probably GATA3. In terms of tissue distribution, mainly expressed in hematopoietic tissues. Also expressed in adult cerebellum, stomach, lymph node, liver and pancreas. Expressed in fetal heart, liver and spleen.

It localises to the nucleus. Transcription regulator that plays an essential role in erythroid and megakaryocytic cell differentiation. Essential cofactor that acts via the formation of a heterodimer with transcription factors of the GATA family GATA1, GATA2 and GATA3. Such heterodimer can both activate or repress transcriptional activity, depending on the cell and promoter context. The heterodimer formed with GATA proteins is essential to activate expression of genes such as NFE2, ITGA2B, alpha- and beta-globin, while it represses expression of KLF1. May be involved in regulation of some genes in gonads. May also be involved in cardiac development, in a non-redundant way with ZFPM2/FOG2. The protein is Zinc finger protein ZFPM1 (ZFPM1) of Homo sapiens (Human).